Here is a 245-residue protein sequence, read N- to C-terminus: Uridylate kinase (245 aa).

12 to 15 serves as a coordination point for ATP; the sequence is KISG. Position 55 (glycine 55) interacts with UMP. ATP is bound by residues glycine 56 and arginine 60. UMP is bound by residues aspartate 76 and 137-144; that span reads AGAPYLTT. The ATP site is built by threonine 164, tyrosine 171, and aspartate 174.

The protein belongs to the UMP kinase family. In terms of assembly, homohexamer.

Its subcellular location is the cytoplasm. The enzyme catalyses UMP + ATP = UDP + ADP. The protein operates within pyrimidine metabolism; CTP biosynthesis via de novo pathway; UDP from UMP (UMPK route): step 1/1. Its activity is regulated as follows. Inhibited by UTP. In terms of biological role, catalyzes the reversible phosphorylation of UMP to UDP. The chain is Uridylate kinase from Chlamydia trachomatis serovar D (strain ATCC VR-885 / DSM 19411 / UW-3/Cx).